A 240-amino-acid polypeptide reads, in one-letter code: Uridylate kinase (240 aa).

12–15 (KLSG) is a binding site for ATP. Residues 20-25 (GEKGFG) form an involved in allosteric activation by GTP region. G54 is a binding site for UMP. The ATP site is built by G55 and R59. Residues D74 and 135-142 (TGSPYFST) each bind UMP. Residues N163, Y169, and D172 each contribute to the ATP site.

The protein belongs to the UMP kinase family. In terms of assembly, homohexamer.

It is found in the cytoplasm. The enzyme catalyses UMP + ATP = UDP + ADP. The protein operates within pyrimidine metabolism; CTP biosynthesis via de novo pathway; UDP from UMP (UMPK route): step 1/1. With respect to regulation, allosterically activated by GTP. Inhibited by UTP. Functionally, catalyzes the reversible phosphorylation of UMP to UDP. The chain is Uridylate kinase from Lactiplantibacillus plantarum (strain ATCC BAA-793 / NCIMB 8826 / WCFS1) (Lactobacillus plantarum).